The chain runs to 862 residues: Aldehyde-alcohol dehydrogenase (862 aa).

The active site involves Cys-244. 420 to 425 is a binding site for NAD(+); the sequence is GFWGGN.

It in the N-terminal section; belongs to the aldehyde dehydrogenase family. In the C-terminal section; belongs to the iron-containing alcohol dehydrogenase family.

It carries out the reaction a primary alcohol + NAD(+) = an aldehyde + NADH + H(+). The enzyme catalyses a secondary alcohol + NAD(+) = a ketone + NADH + H(+). It catalyses the reaction an aldehyde + NAD(+) + H2O = a carboxylate + NADH + 2 H(+). Its function is as follows. Has both aldehyde and alcohol dehydrogenase activities. Can use acetaldehyde, butyraldehyde, butanol and ethanol. The sequence is that of Aldehyde-alcohol dehydrogenase from Clostridium acetobutylicum (strain ATCC 824 / DSM 792 / JCM 1419 / IAM 19013 / LMG 5710 / NBRC 13948 / NRRL B-527 / VKM B-1787 / 2291 / W).